A 258-amino-acid chain; its full sequence is Large ribosomal subunit protein bL21 (258 aa).

Residues lysine 140–lysine 159 show a composition bias toward basic and acidic residues. Residues lysine 140–alanine 181 are disordered.

It belongs to the bacterial ribosomal protein bL21 family. In terms of assembly, part of the 50S ribosomal subunit. Contacts protein L20.

Its function is as follows. This protein binds to 23S rRNA in the presence of protein L20. This is Large ribosomal subunit protein bL21 from Jannaschia sp. (strain CCS1).